An 88-amino-acid polypeptide reads, in one-letter code: uncharacterized protein (88 aa).

Helical transmembrane passes span 13-33 (FLAF…GWGP) and 62-82 (WFNI…ITGI).

The protein localises to the cell membrane. This is an uncharacterized protein from Bacillus subtilis (strain 168).